Here is a 385-residue protein sequence, read N- to C-terminus: Serine/threonine-protein kinase 52 (385 aa).

A Protein kinase domain is found at leucine 82–leucine 356. ATP-binding positions include leucine 88–valine 96 and lysine 109. The Proton acceptor role is filled by aspartate 227.

Belongs to the protein kinase superfamily. Ser/Thr protein kinase family. In terms of assembly, binds to CBC1. Associates with PHOT1, PHOT2, BLUS1 and PM H(+)-ATPase (e.g. AHA1). Post-translationally, autophosphorylated. Phosphorylated by HT1 in response to low CO(2) concentrations. As to expression, expressed in guard cells.

The protein localises to the cytoplasm. It localises to the cytosol. The enzyme catalyses L-seryl-[protein] + ATP = O-phospho-L-seryl-[protein] + ADP + H(+). It catalyses the reaction L-threonyl-[protein] + ATP = O-phospho-L-threonyl-[protein] + ADP + H(+). In terms of biological role, serine/threonine protein kinase that phosphorylates proteins on serine and threonine residues. Collectively with CBC1, acts as a negative regulator of stomatal opening, probably via the inhibition of plasma membrane-type ATPases (AHA1 and AHA2) activity in guard cells, but in an abscisic acid (ABA)-independent manner. However, at low concentrations of CO(2), together with CBC1, stimulates stomatal opening via the inhibition of S-type anion channels in response to blue light (BL) and red light (RL), thus being a key component to maximize photosynthesis in the light under low CO(2) conditions. Required for temperature decrease in leaves. Downstream target of HIGH LEAF TEMPERATURE1 (HT1) during low CO(2)-induced stomatal opening. This is Serine/threonine-protein kinase 52 from Arabidopsis thaliana (Mouse-ear cress).